The following is a 520-amino-acid chain: Protein EARLY FLOWERING 5 (520 aa).

3 consecutive short sequence motifs (nuclear localization signal) follow at residues 16–23 (YRKQIRKR), 52–59 (IRKLDMSK), and 71–78 (KKRQLEDT). The interval 83–410 (VKKRKEYDEK…PPSSFQDGQA (328 aa)) is disordered. Basic and acidic residues-rich tracts occupy residues 87 to 97 (KEYDEKKKEQG) and 114 to 126 (LTGE…EDSV). Over residues 148 to 168 (SSIGLAISSDGASSSSAALSS) the composition is skewed to low complexity. Pro residues-rich tracts occupy residues 198 to 207 (PLPPLPPLPP), 216 to 227 (SPFPPPPPGPPP), and 235 to 253 (PPLP…PPPG). Polar residues-rich tracts occupy residues 267–281 (SDFT…NITS), 300–312 (AESN…NANL), and 326–343 (QQHQ…TNFQ). Composition is skewed to pro residues over residues 346 to 369 (VHPP…PPHP) and 378 to 403 (PRPP…PPPS).

In seedlings, mostly expressed in the shoot apical meristem (SAM) and root tip.

The protein localises to the nucleus. Functionally, involved in the regulation of flowering time in both long and short days. The polypeptide is Protein EARLY FLOWERING 5 (Arabidopsis thaliana (Mouse-ear cress)).